Consider the following 223-residue polypeptide: Deoxyribose-phosphate aldolase (223 aa).

The active-site Proton donor/acceptor is D89. K152 acts as the Schiff-base intermediate with acetaldehyde in catalysis. K181 serves as the catalytic Proton donor/acceptor.

This sequence belongs to the DeoC/FbaB aldolase family. DeoC type 1 subfamily.

The protein localises to the cytoplasm. The enzyme catalyses 2-deoxy-D-ribose 5-phosphate = D-glyceraldehyde 3-phosphate + acetaldehyde. The protein operates within carbohydrate degradation; 2-deoxy-D-ribose 1-phosphate degradation; D-glyceraldehyde 3-phosphate and acetaldehyde from 2-deoxy-alpha-D-ribose 1-phosphate: step 2/2. Catalyzes a reversible aldol reaction between acetaldehyde and D-glyceraldehyde 3-phosphate to generate 2-deoxy-D-ribose 5-phosphate. The protein is Deoxyribose-phosphate aldolase of Listeria monocytogenes serotype 4b (strain F2365).